A 1377-amino-acid polypeptide reads, in one-letter code: DNA-directed RNA polymerase subunit beta' (1377 aa).

Residues cysteine 60, cysteine 62, cysteine 75, and cysteine 78 each coordinate Zn(2+). Mg(2+) contacts are provided by aspartate 449, aspartate 451, and aspartate 453. Zn(2+) is bound by residues cysteine 777, cysteine 851, cysteine 858, and cysteine 861.

Belongs to the RNA polymerase beta' chain family. The RNAP catalytic core consists of 2 alpha, 1 beta, 1 beta' and 1 omega subunit. When a sigma factor is associated with the core the holoenzyme is formed, which can initiate transcription. Mg(2+) serves as cofactor. The cofactor is Zn(2+).

The enzyme catalyses RNA(n) + a ribonucleoside 5'-triphosphate = RNA(n+1) + diphosphate. Its function is as follows. DNA-dependent RNA polymerase catalyzes the transcription of DNA into RNA using the four ribonucleoside triphosphates as substrates. This is DNA-directed RNA polymerase subunit beta' from Borrelia recurrentis (strain A1).